A 111-amino-acid polypeptide reads, in one-letter code: Large ribosomal subunit protein uL22 (111 aa).

This sequence belongs to the universal ribosomal protein uL22 family. In terms of assembly, part of the 50S ribosomal subunit.

Its function is as follows. This protein binds specifically to 23S rRNA; its binding is stimulated by other ribosomal proteins, e.g. L4, L17, and L20. It is important during the early stages of 50S assembly. It makes multiple contacts with different domains of the 23S rRNA in the assembled 50S subunit and ribosome. In terms of biological role, the globular domain of the protein is located near the polypeptide exit tunnel on the outside of the subunit, while an extended beta-hairpin is found that lines the wall of the exit tunnel in the center of the 70S ribosome. This chain is Large ribosomal subunit protein uL22, found in Stenotrophomonas maltophilia (strain R551-3).